The following is a 66-amino-acid chain: MPKMKTKRAAAKRFKITGTGKVMRMRHARNHNRLKKAPRVRRSFDKMAPVHPSDVHRVKPLLPYAW.

This sequence belongs to the bacterial ribosomal protein bL35 family.

The chain is Large ribosomal subunit protein bL35 from Thermomicrobium roseum (strain ATCC 27502 / DSM 5159 / P-2).